We begin with the raw amino-acid sequence, 144 residues long: Small polypeptide DEVIL 18 (144 aa).

Low complexity predominate over residues 30–58 (SFSTKTSSSSSKPVFTRSFSTKPTSYSSS). Residues 30-89 (SFSTKTSSSSSKPVFTRSFSTKPTSYSSSEPIFRRSFSAKPTSSKSPFLSRSGSTKCPVD) form a disordered region. The helical transmembrane segment at 42–58 (PVFTRSFSTKPTSYSSS) threads the bilayer. Over residues 68–84 (AKPTSSKSPFLSRSGST) the composition is skewed to polar residues. The required for DVL/RTFL small polypeptide activity stretch occupies residues 108–139 (SVTRKCRNMAKEHKSRFYIMKRCVLMLVCWHK).

Belongs to the DVL/RTFL small polypeptides family.

Its subcellular location is the cell membrane. In terms of biological role, small polypeptide acting as a regulatory molecule which coordinates cellular responses required for differentiation, growth and development, probably by restricting polar cell proliferation in lateral organs and coordinating socket cell recruitment and differentiation at trichome sites. The polypeptide is Small polypeptide DEVIL 18 (Arabidopsis thaliana (Mouse-ear cress)).